A 63-amino-acid chain; its full sequence is Large ribosomal subunit protein bL35 (63 aa).

The protein belongs to the bacterial ribosomal protein bL35 family.

The polypeptide is Large ribosomal subunit protein bL35 (Campylobacter hominis (strain ATCC BAA-381 / DSM 21671 / CCUG 45161 / LMG 19568 / NCTC 13146 / CH001A)).